The sequence spans 218 residues: Cytidylate kinase (218 aa).

10 to 18 serves as a coordination point for ATP; sequence GPAAAGKST.

This sequence belongs to the cytidylate kinase family. Type 1 subfamily.

The protein localises to the cytoplasm. The enzyme catalyses CMP + ATP = CDP + ADP. It catalyses the reaction dCMP + ATP = dCDP + ADP. This Staphylococcus haemolyticus (strain JCSC1435) protein is Cytidylate kinase.